A 134-amino-acid chain; its full sequence is Large ribosomal subunit protein eL32 (134 aa).

The protein belongs to the eukaryotic ribosomal protein eL32 family.

This Apis mellifera (Honeybee) protein is Large ribosomal subunit protein eL32 (RpL32).